The chain runs to 759 residues: Tripartite motif-containing protein 46 (759 aa).

Residues 1-166 (MAEGEDMQTF…VERYRQSVSV (166 aa)) are required for proximal axon localization, axon formation and migration. The RING-type 1; degenerate zinc-finger motif lies at 33–59 (CPVCQEMYKQPLVLPCTHNVCQACARE). A disordered region spans residues 67–98 (IGHGGDPSSEPTSPASTPSTRSPRLSRRTLPK). Positions 73–89 (PSSEPTSPASTPSTRSP) are enriched in low complexity. Residues 172–231 (CQLCKPPPLEATKGCSECRATFCNECFKLFHPWGTQKAQHEPTLPTLSFRPKGLMCPDHK) form an RING-type 2; degenerate zinc finger. A B box-type zinc finger spans residues 222–263 (PKGLMCPDHKEEVTHYCKTCQRLVCQLCRVRRTHSGHKITPV). Zn(2+)-binding residues include cysteine 227, histidine 230, cysteine 249, and histidine 255. A coiled-coil region spans residues 294–400 (ELEETIRHTE…RATEALQTFR (107 aa)). Phosphoserine is present on serine 330. A COS domain is found at 370-427 (LKETDQPCFVQAAKQLHNRIARATEALQTFRPAASSSFRHCQLDVGREMKLLTELNFL). The interval 411–429 (QLDVGREMKLLTELNFLRV) is required for microtubule association, proximal axon localization and axon formation. One can recognise a Fibronectin type-III domain in the interval 429–528 (VPEAPVIDTQ…EDVHLHTPPA (100 aa)). Positions 513 to 747 (GYGEYSEDVH…LQEPVGTKPE (235 aa)) constitute a B30.2/SPRY domain. Serine 627 is subject to Phosphoserine.

The protein belongs to the TRIM/RBCC family. Interacts with TUBB3 and TUBA4A. Expressed in primary hippocampal and cortical neurons.

Its subcellular location is the cell projection. It is found in the axon. It localises to the cytoplasm. The protein resides in the cytoskeleton. In terms of biological role, microtubule-associated protein that is involved in the formation of parallel microtubule bundles linked by cross-bridges in the proximal axon. Required for the uniform orientation and maintenance of the parallel microtubule fascicles, which are important for efficient cargo delivery and trafficking in axons. Thereby also required for proper axon specification, the establishment of neuronal polarity and proper neuronal migration. This chain is Tripartite motif-containing protein 46, found in Rattus norvegicus (Rat).